Reading from the N-terminus, the 211-residue chain is MSSLRFTEEDFRTFTIEGLDARMSVLKDTVRPKLQGLGDHFAPVLSALTGDEMFVHVAKHARRSVNPPDDSWVAFANNKRGYKKLPHFQIGLWETHVFVWFALIYESPLKQEYGQLFKKHLPDIESSIPSRFFWSADHTKPDAKRQSEMNEKDLENLFERLVNVKKAEALCGIQLSKDEVLHMSEEAFLSEIEAAFEKLAFLYRLTQKVSV.

Belongs to the UPF0637 family.

The chain is UPF0637 protein BLi01683/BL05149 from Bacillus licheniformis (strain ATCC 14580 / DSM 13 / JCM 2505 / CCUG 7422 / NBRC 12200 / NCIMB 9375 / NCTC 10341 / NRRL NRS-1264 / Gibson 46).